Reading from the N-terminus, the 916-residue chain is Translation initiation factor IF-2 (916 aa).

A disordered region spans residues 50-326 (NRDKESTSQP…NSTLQQGFNK (277 aa)). The segment covering 109-241 (AQREAEEKAR…LAEENAEKWT (133 aa)) has biased composition (basic and acidic residues). Residues 277–291 (GRGRAAKAPRPKKNN) are compositionally biased toward basic residues. A compositionally biased stretch (basic and acidic residues) spans 292–304 (RHSEKADREEARA). In terms of domain architecture, tr-type G spans 415–584 (SRAPVVTIMG…LLQAEVLELK (170 aa)). The G1 stretch occupies residues 424 to 431 (GHVDHGKT). 424 to 431 (GHVDHGKT) is a binding site for GTP. Residues 449–453 (GITQH) form a G2 region. The segment at 470–473 (DTPG) is G3. Residues 470-474 (DTPGH) and 524-527 (NKID) each bind GTP. The tract at residues 524-527 (NKID) is G4. A G5 region spans residues 560–562 (SAK).

This sequence belongs to the TRAFAC class translation factor GTPase superfamily. Classic translation factor GTPase family. IF-2 subfamily.

The protein localises to the cytoplasm. In terms of biological role, one of the essential components for the initiation of protein synthesis. Protects formylmethionyl-tRNA from spontaneous hydrolysis and promotes its binding to the 30S ribosomal subunits. Also involved in the hydrolysis of GTP during the formation of the 70S ribosomal complex. The chain is Translation initiation factor IF-2 from Proteus mirabilis (strain HI4320).